A 260-amino-acid chain; its full sequence is Indole-3-glycerol phosphate synthase (260 aa).

The protein belongs to the TrpC family.

The catalysed reaction is 1-(2-carboxyphenylamino)-1-deoxy-D-ribulose 5-phosphate + H(+) = (1S,2R)-1-C-(indol-3-yl)glycerol 3-phosphate + CO2 + H2O. It participates in amino-acid biosynthesis; L-tryptophan biosynthesis; L-tryptophan from chorismate: step 4/5. In Ruminiclostridium cellulolyticum (strain ATCC 35319 / DSM 5812 / JCM 6584 / H10) (Clostridium cellulolyticum), this protein is Indole-3-glycerol phosphate synthase.